A 213-amino-acid chain; its full sequence is ATP phosphoribosyltransferase (213 aa).

This sequence belongs to the ATP phosphoribosyltransferase family. Short subfamily. Heteromultimer composed of HisG and HisZ subunits.

It localises to the cytoplasm. The catalysed reaction is 1-(5-phospho-beta-D-ribosyl)-ATP + diphosphate = 5-phospho-alpha-D-ribose 1-diphosphate + ATP. Its pathway is amino-acid biosynthesis; L-histidine biosynthesis; L-histidine from 5-phospho-alpha-D-ribose 1-diphosphate: step 1/9. In terms of biological role, catalyzes the condensation of ATP and 5-phosphoribose 1-diphosphate to form N'-(5'-phosphoribosyl)-ATP (PR-ATP). Has a crucial role in the pathway because the rate of histidine biosynthesis seems to be controlled primarily by regulation of HisG enzymatic activity. The polypeptide is ATP phosphoribosyltransferase (Anoxybacillus flavithermus (strain DSM 21510 / WK1)).